We begin with the raw amino-acid sequence, 463 residues long: Sodium-coupled neutral amino acid transporter 7 (463 aa).

The residue at position 28 (serine 28) is a Phosphoserine. 11 helical membrane-spanning segments follow: residues 56–76, 82–102, 130–150, 179–199, 206–226, 240–260, 283–303, 320–340, 372–392, 396–416, and 429–449; these read AVFI…PAAF, VAAG…GLVI, LCEV…LIII, FTIS…KEIG, FLSV…YIWP, ASWM…QCHV, AAMV…FLTF, VAVA…YPIL, VLQT…IPDI, ISVI…LCLI, and ASWW…AFIF.

Belongs to the amino acid/polyamine transporter 2 family. In terms of assembly, interacts with the mTORC1 complex; this interaction mediates the recruitment of mTORC1 to the lysosome and its subsequent activation. Highly expressed in the brain, including the hippocampus, especially in the granular layer of dentate gyrus cells and the pyramidal cell layer of the hippocampus, amygdala, thalamus, hypothalamus, in the layer of Purkinje cells in the cerebellum and the layers of cortex. Particularly strong expression in neurons of the ventromedial hypothalamus, basolateral amygdala, ventral tegmental area, and locus coeruleus. Not detected in glial cells, including astrocytes. In addition to brain, also expressed in the spinal cord (at protein level).

It localises to the lysosome membrane. The protein resides in the cell projection. It is found in the axon. The enzyme catalyses L-glutamine(in) + Na(+)(in) = L-glutamine(out) + Na(+)(out). The catalysed reaction is L-asparagine(in) + Na(+)(in) = L-asparagine(out) + Na(+)(out). Functionally, symporter that selectively cotransports sodium ions and amino acids, such as L-glutamine and L-asparagine from the lysosome into the cytoplasm and may participates in mTORC1 activation. The transport activity requires an acidic lysosomal lumen. In Mus musculus (Mouse), this protein is Sodium-coupled neutral amino acid transporter 7.